We begin with the raw amino-acid sequence, 84 residues long: Putative membrane protein insertion efficiency factor (84 aa).

Belongs to the UPF0161 family.

The protein resides in the cell inner membrane. Functionally, could be involved in insertion of integral membrane proteins into the membrane. The protein is Putative membrane protein insertion efficiency factor of Shewanella oneidensis (strain ATCC 700550 / JCM 31522 / CIP 106686 / LMG 19005 / NCIMB 14063 / MR-1).